A 179-amino-acid chain; its full sequence is Dynein light chain Tctex-type 5 (179 aa).

It belongs to the dynein light chain Tctex-type family. In terms of assembly, interacts with ZMYND10.

The polypeptide is Dynein light chain Tctex-type 5 (DYNLT5) (Homo sapiens (Human)).